A 487-amino-acid polypeptide reads, in one-letter code: Glutamate--tRNA ligase (487 aa).

A 'HIGH' region motif is present at residues 11–21 (PSPTGYPHLGN). Residues Cys108, Cys110, Cys135, and Asp137 each contribute to the Zn(2+) site. The short motif at 245-249 (KLSKR) is the 'KMSKS' region element. Residue Lys248 coordinates ATP.

This sequence belongs to the class-I aminoacyl-tRNA synthetase family. Glutamate--tRNA ligase type 1 subfamily. As to quaternary structure, monomer. The cofactor is Zn(2+).

Its subcellular location is the cytoplasm. It catalyses the reaction tRNA(Glu) + L-glutamate + ATP = L-glutamyl-tRNA(Glu) + AMP + diphosphate. Its function is as follows. Catalyzes the attachment of glutamate to tRNA(Glu) in a two-step reaction: glutamate is first activated by ATP to form Glu-AMP and then transferred to the acceptor end of tRNA(Glu). In Dehalococcoides mccartyi (strain CBDB1), this protein is Glutamate--tRNA ligase.